Here is a 244-residue protein sequence, read N- to C-terminus: Ribosomal RNA large subunit methyltransferase E (244 aa).

S-adenosyl-L-methionine-binding residues include Gly81, Trp83, Asp109, Asp125, and Asp149. Catalysis depends on Lys189, which acts as the Proton acceptor.

This sequence belongs to the class I-like SAM-binding methyltransferase superfamily. RNA methyltransferase RlmE family.

It is found in the cytoplasm. It catalyses the reaction uridine(2552) in 23S rRNA + S-adenosyl-L-methionine = 2'-O-methyluridine(2552) in 23S rRNA + S-adenosyl-L-homocysteine + H(+). Functionally, specifically methylates the uridine in position 2552 of 23S rRNA at the 2'-O position of the ribose in the fully assembled 50S ribosomal subunit. In Cereibacter sphaeroides (strain ATCC 17023 / DSM 158 / JCM 6121 / CCUG 31486 / LMG 2827 / NBRC 12203 / NCIMB 8253 / ATH 2.4.1.) (Rhodobacter sphaeroides), this protein is Ribosomal RNA large subunit methyltransferase E.